A 31-amino-acid chain; its full sequence is Malate dehydrogenase, mitochondrial (31 aa).

NAD(+)-binding positions include 9-19 (GIGQPLSLLMK) and 20-31 (DDLFNINAGIVK).

The protein belongs to the LDH/MDH superfamily. MDH type 1 family. Homodimer.

It localises to the mitochondrion matrix. The catalysed reaction is (S)-malate + NAD(+) = oxaloacetate + NADH + H(+). This chain is Malate dehydrogenase, mitochondrial, found in Imperata cylindrica (Cogon grass).